The chain runs to 247 residues: Carboxy-S-adenosyl-L-methionine synthase (247 aa).

S-adenosyl-L-methionine is bound by residues Y39, 64 to 66, 89 to 90, 117 to 118, N132, and R199; these read GCS, DN, and DI.

The protein belongs to the class I-like SAM-binding methyltransferase superfamily. Cx-SAM synthase family. Homodimer.

The enzyme catalyses prephenate + S-adenosyl-L-methionine = carboxy-S-adenosyl-L-methionine + 3-phenylpyruvate + H2O. Its function is as follows. Catalyzes the conversion of S-adenosyl-L-methionine (SAM) to carboxy-S-adenosyl-L-methionine (Cx-SAM). The chain is Carboxy-S-adenosyl-L-methionine synthase from Salmonella choleraesuis (strain SC-B67).